A 360-amino-acid polypeptide reads, in one-letter code: Aminomethyltransferase (360 aa).

This sequence belongs to the GcvT family. As to quaternary structure, the glycine cleavage system is composed of four proteins: P, T, L and H.

It catalyses the reaction N(6)-[(R)-S(8)-aminomethyldihydrolipoyl]-L-lysyl-[protein] + (6S)-5,6,7,8-tetrahydrofolate = N(6)-[(R)-dihydrolipoyl]-L-lysyl-[protein] + (6R)-5,10-methylene-5,6,7,8-tetrahydrofolate + NH4(+). The glycine cleavage system catalyzes the degradation of glycine. This Exiguobacterium sibiricum (strain DSM 17290 / CCUG 55495 / CIP 109462 / JCM 13490 / 255-15) protein is Aminomethyltransferase.